A 186-amino-acid chain; its full sequence is MIDAKTCINDAQEKMDMAVMYLEEALAHIRAGKASTRLLDGIRVDSYGSMVPISNVAAVTTPDARSIAIKPWDKSMFRIIEKAIMDSDLGITPENNGEIIRLGIPPLTEERRKQLAKQCKGEGETAKVSIRNARRDAIDTLKKAVKEGMPEDEQKNAEAKLQKVHDKYIAKIEELLAEKDKEIMTV.

The protein belongs to the RRF family.

It localises to the cytoplasm. Its function is as follows. Responsible for the release of ribosomes from messenger RNA at the termination of protein biosynthesis. May increase the efficiency of translation by recycling ribosomes from one round of translation to another. The protein is Ribosome-recycling factor of Phocaeicola vulgatus (strain ATCC 8482 / DSM 1447 / JCM 5826 / CCUG 4940 / NBRC 14291 / NCTC 11154) (Bacteroides vulgatus).